Here is a 648-residue protein sequence, read N- to C-terminus: Macrolide export ATP-binding/permease protein MacB (648 aa).

Positions 5-243 (LELCNVSRSY…QGVDAAVVNT (239 aa)) constitute an ABC transporter domain. Position 41–48 (41–48 (GVSGSGKS)) interacts with ATP. The next 5 membrane-spanning stretches (helical) occupy residues 273-293 (LLTMLGIIIGIASVVSIVVVG), 417-437 (ANVVGEVVLAGNMPVIVIGVA), 523-543 (LFLTLVAVISLVVGGIGVMNI), 577-597 (VLVCLVGGALGISLSMFIAFM), and 611-631 (LTALASAFLCSTFTGILFGWL).

It belongs to the ABC transporter superfamily. Macrolide exporter (TC 3.A.1.122) family. In terms of assembly, homodimer. Part of the tripartite efflux system MacAB-TolC, which is composed of an inner membrane transporter, MacB, a periplasmic membrane fusion protein, MacA, and an outer membrane component, TolC. The complex forms a large protein conduit and can translocate molecules across both the inner and outer membranes. Interacts with MacA.

Its subcellular location is the cell inner membrane. Part of the tripartite efflux system MacAB-TolC. MacB is a non-canonical ABC transporter that contains transmembrane domains (TMD), which form a pore in the inner membrane, and an ATP-binding domain (NBD), which is responsible for energy generation. Confers resistance against macrolides. This Salmonella typhimurium (strain LT2 / SGSC1412 / ATCC 700720) protein is Macrolide export ATP-binding/permease protein MacB.